The sequence spans 209 residues: Uracil phosphoribosyltransferase (209 aa).

5-phospho-alpha-D-ribose 1-diphosphate is bound by residues Arg-79, Arg-104, and 131–139 (DPMLATGGS). Uracil contacts are provided by residues Ile-194 and 199-201 (GDA). Asp-200 provides a ligand contact to 5-phospho-alpha-D-ribose 1-diphosphate.

The protein belongs to the UPRTase family. Mg(2+) is required as a cofactor.

It catalyses the reaction UMP + diphosphate = 5-phospho-alpha-D-ribose 1-diphosphate + uracil. It participates in pyrimidine metabolism; UMP biosynthesis via salvage pathway; UMP from uracil: step 1/1. Allosterically activated by GTP. Functionally, catalyzes the conversion of uracil and 5-phospho-alpha-D-ribose 1-diphosphate (PRPP) to UMP and diphosphate. In Agathobacter rectalis (strain ATCC 33656 / DSM 3377 / JCM 17463 / KCTC 5835 / VPI 0990) (Eubacterium rectale), this protein is Uracil phosphoribosyltransferase.